The primary structure comprises 562 residues: MKAPVRALICQGIEALRSNGTLPTNTLPPDFVVERPKTRKHGDFATNVAMLLSKATGSNPRLLAQTLVAALPTSADIARIEIAGPGFINFHLHPVAYQRETINVLKQDNDYGRNLSGQSRTVGVEYVSANPTGPLHVGHGRAAAIGDCLARLLEANGWNVKREFYYNDAGVQIENLVRSVQARARGLKPGDALWPTDAYNGEYIADIAKAYLAGDSINMVDTIITSTKNVDDTAAIHHFAVNYLRNEQNHDLAAFNVDFDIYFLESSLYKDGKVEETVQKLINSGHTYEEGGALWLKSTHFGDDKDRVMRKSDGSYTYFVPDIAYHLSKWQRGYERAITELGADHHGSLARVHAGLQALEIGIPPGWPEYVLHQMVTVMRGGEEVKLSKRSGGYVTLRDLIEETSTDATRWFLIARKPDSQLTFDIDLARQKSNDNPVFYVQYAYARVCSLMHQAHEKNLNYDQTSGMASLDQLSDNTSLCLMIEISRYPEIVQIACELLEPHLIAQYLRELAHAFHTWYHNTPVLVENAVERNAKLTLACATRQVLANGLNLLGVGTPEKM.

The 'HIGH' region motif lies at 129–139 (ANPTGPLHVGH).

It belongs to the class-I aminoacyl-tRNA synthetase family. As to quaternary structure, monomer.

It is found in the cytoplasm. The catalysed reaction is tRNA(Arg) + L-arginine + ATP = L-arginyl-tRNA(Arg) + AMP + diphosphate. The protein is Arginine--tRNA ligase of Xylella fastidiosa (strain M23).